The sequence spans 207 residues: Protein phosphatase inhibitor 2 (207 aa).

Disordered stretches follow at residues 1–44 (MAAS…SKKS), 65–97 (LMKI…ALTP), and 110–146 (ESLE…EMKR). N-acetylalanine is present on alanine 2. Residues 12–17 (KGILKN) form a required for binding PPP1CC region. Residues 19 to 28 (SSTTSSVVST) show a composition bias toward low complexity. Basic and acidic residues predominate over residues 35-44 (SVDEELSKKS). The required for binding PPP1CC stretch occupies residues 43-55 (KSQKWDEMSILAT). Serine 44 carries the post-translational modification Phosphoserine; by ATM. Threonine 73 is subject to Phosphothreonine; by GSK3. Residues 80-91 (ADDEDALSDSET) show a composition bias toward acidic residues. Residues serine 87 and serine 89 each carry the phosphoserine modification. A phosphothreonine mark is found at threonine 92 and threonine 96. Residues 112–122 (LEPKYRVREQE) show a composition bias toward basic and acidic residues. 4 positions are modified to phosphoserine: serine 123, serine 124, serine 129, and serine 132. The span at 123 to 132 (SSGDEDSDLS) shows a compositional bias: acidic residues. Basic and acidic residues predominate over residues 133 to 145 (PEEREKKRQFEMK). Residues 149–152 (HYNE) form a required for binding PPP1CC catalytic center, displacing metal ions and inhibition of PPP1CC catalytic activity region. A disordered region spans residues 165-207 (KDLNDEEEDEEMSETAAGESMNMEESSQGSATSDQLQNKSQSS). Acidic residues predominate over residues 168–177 (NDEEEDEEMS). A compositionally biased stretch (polar residues) spans 187 to 207 (MEESSQGSATSDQLQNKSQSS).

This sequence belongs to the protein phosphatase inhibitor 2 family. In terms of assembly, heterodimer with PP1. Phosphorylation on Ser-44 by ATM activates PP1 by dissociating the PP1-PPP1R2 complex. Phosphorylation on Thr-73 by GSK3 activates PP1 by dissociating the PP1-PPP1R2 complex.

Inhibitor of protein-phosphatase 1. The polypeptide is Protein phosphatase inhibitor 2 (PPP1R2) (Bos taurus (Bovine)).